Consider the following 744-residue polypeptide: MPESPDAYVNRTYDQTVAVRRSLKRRNSPAASEDGLGWPRRLNLRILAQPCRTSSPLGEDFDYAKEFLSLDLDELARDIDEVLTTSQDWWPADFGHYGPLVLRMAWHFAGTYRIGDGRGGAGAGMLRFAPLNSFPDNRNLDKARRLLWPVKKKYGRKISWSDLMIFAGNRALESMGCRTFGFAGGREDAWEADETYWGPESTWLADERHSGVRDLDQPLAASEMGLIYVDPQGPATLPDPLASARDIRETFRRMGMNDEETVALIAGGHTFGKSHGPTDPSRCLGPEPEGAPLEALGLGWVNSFGTGNGADTVTSGLDGIWTATPTKWDMSFLTTLFAYEWDVALSPAGMWQWVPRNGAGAGTVPDPYDPSRTHAPTMLTTDLALQEDPRYRVIALRFLENPDEFADTFARAWFKLTHIDMGPIQRYLGPLVPTERMIWQDPVPHVDHELADADDVAALKREILGSGLSVSQLVTTAWASASTFRNSDKRGGANGARIRLEPQRSWAVNEPEKLAIVLDRLERIRRRFNDSHRGGKQISAADLIMLGGCAAVEHAAAEAGHPIEVPCRLGRTDAPQEWTDIEWFSALEPTADAFRNYVGEGNRPPPEHLLVDRASQLTLTAPQMTVLLGGLRVLGANHGGSPLGVFTASPGALSNDFFVNLLDVNIEWTPRADTADWTAAYEGRDRRTGEVTWIASRVDLSFASDPVLRAISEVYASADAEEKFVRDFVSAWDKVMNLDLFDRT.

A cross-link (tryptophyl-tyrosyl-methioninium (Trp-Tyr) (with M-254)) is located at residues 106–228; that stretch reads WHFAGTYRIG…LAASEMGLIY (123 aa). His-107 serves as the catalytic Proton acceptor. The tryptophyl-tyrosyl-methioninium (Tyr-Met) (with W-106) cross-link spans 228-254; that stretch reads YVDPQGPATLPDPLASARDIRETFRRM. His-269 contributes to the heme b binding site.

Belongs to the peroxidase family. Peroxidase/catalase subfamily. In terms of assembly, homodimer or homotetramer. The cofactor is heme b. Post-translationally, formation of the three residue Trp-Tyr-Met cross-link is important for the catalase, but not the peroxidase activity of the enzyme.

It carries out the reaction H2O2 + AH2 = A + 2 H2O. The catalysed reaction is 2 H2O2 = O2 + 2 H2O. Functionally, bifunctional enzyme with both catalase and broad-spectrum peroxidase activity. This chain is Catalase-peroxidase 3, found in Mycolicibacterium smegmatis (strain ATCC 700084 / mc(2)155) (Mycobacterium smegmatis).